The primary structure comprises 410 residues: Peptidase T (410 aa).

Position 78 (histidine 78) interacts with Zn(2+). Aspartate 80 is a catalytic residue. Aspartate 140 provides a ligand contact to Zn(2+). Catalysis depends on glutamate 174, which acts as the Proton acceptor. Positions 175, 197, and 379 each coordinate Zn(2+).

The protein belongs to the peptidase M20B family. The cofactor is Zn(2+).

It localises to the cytoplasm. The catalysed reaction is Release of the N-terminal residue from a tripeptide.. Cleaves the N-terminal amino acid of tripeptides. The polypeptide is Peptidase T (Staphylococcus saprophyticus subsp. saprophyticus (strain ATCC 15305 / DSM 20229 / NCIMB 8711 / NCTC 7292 / S-41)).